We begin with the raw amino-acid sequence, 250 residues long: Small ribosomal subunit protein uS3 (250 aa).

The 73-residue stretch at 39–111 (IRTLIKNHYP…KVQINIFEVK (73 aa)) folds into the KH type-2 domain.

It belongs to the universal ribosomal protein uS3 family. As to quaternary structure, part of the 30S ribosomal subunit. Forms a tight complex with proteins S10 and S14.

Functionally, binds the lower part of the 30S subunit head. Binds mRNA in the 70S ribosome, positioning it for translation. This Phytoplasma vitis (Flavescence doree phytoplasma) protein is Small ribosomal subunit protein uS3.